The following is a 214-amino-acid chain: ATP phosphoribosyltransferase (214 aa).

It belongs to the ATP phosphoribosyltransferase family. Short subfamily. Heteromultimer composed of HisG and HisZ subunits.

It localises to the cytoplasm. The enzyme catalyses 1-(5-phospho-beta-D-ribosyl)-ATP + diphosphate = 5-phospho-alpha-D-ribose 1-diphosphate + ATP. It participates in amino-acid biosynthesis; L-histidine biosynthesis; L-histidine from 5-phospho-alpha-D-ribose 1-diphosphate: step 1/9. Its function is as follows. Catalyzes the condensation of ATP and 5-phosphoribose 1-diphosphate to form N'-(5'-phosphoribosyl)-ATP (PR-ATP). Has a crucial role in the pathway because the rate of histidine biosynthesis seems to be controlled primarily by regulation of HisG enzymatic activity. The polypeptide is ATP phosphoribosyltransferase (Marinomonas sp. (strain MWYL1)).